Here is an 842-residue protein sequence, read N- to C-terminus: DNA mismatch repair protein MutS (842 aa).

ATP is bound at residue Gly-596–Ser-603.

The protein belongs to the DNA mismatch repair MutS family.

In terms of biological role, this protein is involved in the repair of mismatches in DNA. It is possible that it carries out the mismatch recognition step. This protein has a weak ATPase activity. The chain is DNA mismatch repair protein MutS from Exiguobacterium sp. (strain ATCC BAA-1283 / AT1b).